Here is a 427-residue protein sequence, read N- to C-terminus: MTRTNSDFLTNSDPAIAGLINQELQRQRDHLELIASENFTSAAVLAAQGSVLTNKYAEGLPGKRYYGGCEFIDKIEQIAIDRAKQLFGADHANVQPHSGAQANFAVFLTLLKPGDKIMGMDLSHGGHLTHGSPVNVSGKWFQVCHYGVSQQTEQLDYDQIRELALRERPKLLICGYSAYPRIIDFEKFRSIADEVGAYLLADIAHIAGLVATGLHPNPLPYCDVVTTTTHKTLRGPRGGLILTRDAELGKKLDKSVFPGTQGGPLEHVIAGKAVAFGEALKPEFQGYSAQVIDNARTLANQLQTRGLKLVSDGTDNHLMLVDLRSVNMTGKRADQLVSEVNITANKNTVPFDPQSPFVTSGLRLGSPAMTTRGMGEAEFTEIGNIIADRLLNPDSDTVAQDCKRRVAALCDRFPLYPHLEIPVPVLA.

(6S)-5,6,7,8-tetrahydrofolate contacts are provided by residues leucine 122 and 126–128 (GHL). The residue at position 231 (lysine 231) is an N6-(pyridoxal phosphate)lysine. 355 to 357 (SPF) lines the (6S)-5,6,7,8-tetrahydrofolate pocket.

Belongs to the SHMT family. In terms of assembly, homodimer. Pyridoxal 5'-phosphate is required as a cofactor.

The protein resides in the cytoplasm. It catalyses the reaction (6R)-5,10-methylene-5,6,7,8-tetrahydrofolate + glycine + H2O = (6S)-5,6,7,8-tetrahydrofolate + L-serine. The protein operates within one-carbon metabolism; tetrahydrofolate interconversion. It participates in amino-acid biosynthesis; glycine biosynthesis; glycine from L-serine: step 1/1. In terms of biological role, catalyzes the reversible interconversion of serine and glycine with tetrahydrofolate (THF) serving as the one-carbon carrier. This reaction serves as the major source of one-carbon groups required for the biosynthesis of purines, thymidylate, methionine, and other important biomolecules. Also exhibits THF-independent aldolase activity toward beta-hydroxyamino acids, producing glycine and aldehydes, via a retro-aldol mechanism. This Nostoc sp. (strain PCC 7120 / SAG 25.82 / UTEX 2576) protein is Serine hydroxymethyltransferase.